Consider the following 755-residue polypeptide: Kojibiose phosphorylase (755 aa).

333–334 is a binding site for substrate; the sequence is WD. The active-site Proton donor is the Glu-473. 573-574 provides a ligand contact to substrate; it reads KQ.

This sequence belongs to the glycosyl hydrolase 65 family.

It catalyses the reaction kojibiose + phosphate = beta-D-glucose 1-phosphate + D-glucose. Functionally, in vitro catalyzes the phosphorolysis of D-kojibiose into beta-D-glucose 1-phosphate and D-glucose. No other disaccharides tested substitute for D-kojibiose. In the reverse direction disaccharides can be formed from beta-D-glucose 1-phosphate plus D-glucose, L-sorbose, D-sorbitol, L-iditol or 1,5-anhydro-D-glucitol, but with low efficiency. The beta-D-glucose 1-phosphate product is the substrate for YcjU (AC P77366), the next apparent enzyme in the putative biochemical pathway encoded in this locus (yjcM to ycjW). This chain is Kojibiose phosphorylase (ycjT), found in Escherichia coli (strain K12).